The chain runs to 588 residues: MNNSINHKFHHISRAEYQELLAVSRGDAVADYIIDNVSILDLINGGEISGPIVIKGRYIAGVGAEYADAPALQRIDARGATAVPGFIDAHLHIESSMMTPVTFETATLPRGLTTVICDPHEIVNVMGEAGFAWFARCAEQARQNQYLQVSSCVPALEGCDVNGASFTLEQMLAWRDHPQVTGLAEMMDYSGVISGQNALLDKLDAFRHLTLDGHCPGLGGKELNAYITAGIENCHESYQLEEGRRKLQLGMSLMIREGSAARNLNALAPLINEFNSPQCMLCTDDRNPWEIAHEGHIDALIRRLIEQHNVPLHVAYRVASWSTARHFGLNHLGLLAPGKQADIVLLSDARKVTVQQVLVKGEPIDAQTLQAEESARLAQSAPPYGNTIARQPVSASDFALQFTPGKRYRVIDVIHNELITHSHSSVYSENGFDRDDVSFIAVLERYGQRLAPACGLLGGFGLNEGALAATVSHDSHNIVVIGRSAEEMALAVNQVIQDGGGLCVVRNGQVQSHLPLPIAGLMSTDTAQLLAEQIDALKAAARECGPLPDEPFIQMAFLSLPVIPALKLTSQGLFDGEKFAFTTLEVTE.

It belongs to the metallo-dependent hydrolases superfamily. Adenine deaminase family. As to quaternary structure, homodimer. It depends on Mn(2+) as a cofactor.

The enzyme catalyses adenine + H2O + H(+) = hypoxanthine + NH4(+). In Escherichia coli O139:H28 (strain E24377A / ETEC), this protein is Adenine deaminase.